We begin with the raw amino-acid sequence, 707 residues long: Methionine--tRNA ligase (707 aa).

Residues 13 to 23 (PYANGNFHIGH) carry the 'HIGH' region motif. 4 residues coordinate Zn(2+): C147, C150, C160, and C163. Residues 344–348 (KMSKS) carry the 'KMSKS' region motif. ATP is bound at residue K347. Residues 601 to 707 (DFAKVDLRIA…PGATPGMRIH (107 aa)) enclose the tRNA-binding domain.

Belongs to the class-I aminoacyl-tRNA synthetase family. MetG type 1 subfamily. As to quaternary structure, homodimer. The cofactor is Zn(2+).

Its subcellular location is the cytoplasm. The enzyme catalyses tRNA(Met) + L-methionine + ATP = L-methionyl-tRNA(Met) + AMP + diphosphate. In terms of biological role, is required not only for elongation of protein synthesis but also for the initiation of all mRNA translation through initiator tRNA(fMet) aminoacylation. The sequence is that of Methionine--tRNA ligase from Polaromonas naphthalenivorans (strain CJ2).